A 56-amino-acid chain; its full sequence is Repressor-like protein SSo7c4 (56 aa).

Positions 4–51 (EEIVKVSRNYQVTIPAKVRQKFQIKEGDLVKVTFDESGGVVKIQLLDS) constitute a SpoVT-AbrB domain.

The sequence is that of Repressor-like protein SSo7c4 from Saccharolobus solfataricus (strain ATCC 35092 / DSM 1617 / JCM 11322 / P2) (Sulfolobus solfataricus).